The primary structure comprises 109 residues: Aquaporin-2 (109 aa).

Over 1–6 (SVAFSR) the chain is Cytoplasmic. The helical transmembrane segment at 7–27 (AVLAEFLATLIFVFFGLGSAL) threads the bilayer. Residues 28 to 35 (SWPQALPS) lie on the Extracellular side of the membrane. The helical transmembrane segment at 36–54 (VLQIALAFGLAIGTLVQAL) threads the bilayer. The Cytoplasmic segment spans residues 55–59 (GHVSG). Residues 60-69 (AHINPAVTVA) constitute an intramembrane region (discontinuously helical). An NPA 1 motif is present at residues 63–65 (NPA). The Cytoplasmic portion of the chain corresponds to 70 to 80 (CLVGCHVSFLR). Residues 81–102 (AAFYVAAQLLGAVAGAAILHEI) traverse the membrane as a helical segment. Over 103–109 (TPPDVRG) the chain is Extracellular.

It belongs to the MIP/aquaporin (TC 1.A.8) family. In terms of assembly, homotetramer. In terms of processing, serine phosphorylation is necessary and sufficient for expression at the apical membrane. Endocytosis is not phosphorylation-dependent. N-glycosylated.

It localises to the apical cell membrane. It is found in the basolateral cell membrane. The protein localises to the cell membrane. The protein resides in the cytoplasmic vesicle membrane. Its subcellular location is the golgi apparatus. It localises to the trans-Golgi network membrane. The enzyme catalyses H2O(in) = H2O(out). It catalyses the reaction glycerol(in) = glycerol(out). Functionally, forms a water-specific channel that provides the plasma membranes of renal collecting duct with high permeability to water, thereby permitting water to move in the direction of an osmotic gradient. Plays an essential role in renal water homeostasis. Could also be permeable to glycerol. This Dasypus novemcinctus (Nine-banded armadillo) protein is Aquaporin-2.